Consider the following 141-residue polypeptide: Nucleoside diphosphate kinase (141 aa).

6 residues coordinate ATP: Lys-11, Phe-59, Arg-87, Thr-93, Arg-104, and Asn-114. Residue His-117 is the Pros-phosphohistidine intermediate of the active site.

The protein belongs to the NDK family. In terms of assembly, homotetramer. Mg(2+) serves as cofactor.

The protein resides in the cytoplasm. It carries out the reaction a 2'-deoxyribonucleoside 5'-diphosphate + ATP = a 2'-deoxyribonucleoside 5'-triphosphate + ADP. It catalyses the reaction a ribonucleoside 5'-diphosphate + ATP = a ribonucleoside 5'-triphosphate + ADP. Major role in the synthesis of nucleoside triphosphates other than ATP. The ATP gamma phosphate is transferred to the NDP beta phosphate via a ping-pong mechanism, using a phosphorylated active-site intermediate. In Actinobacillus succinogenes (strain ATCC 55618 / DSM 22257 / CCUG 43843 / 130Z), this protein is Nucleoside diphosphate kinase.